The sequence spans 258 residues: Acetylglutamate kinase (258 aa).

Substrate is bound by residues 44–45 (GG), R66, and N158. ATP-binding positions include 181–186 (DVSGIL) and 209–211 (IIT).

Belongs to the acetylglutamate kinase family. ArgB subfamily. As to quaternary structure, homodimer.

The protein resides in the cytoplasm. The enzyme catalyses N-acetyl-L-glutamate + ATP = N-acetyl-L-glutamyl 5-phosphate + ADP. The protein operates within amino-acid biosynthesis; L-arginine biosynthesis; N(2)-acetyl-L-ornithine from L-glutamate: step 2/4. Catalyzes the ATP-dependent phosphorylation of N-acetyl-L-glutamate. This chain is Acetylglutamate kinase, found in Salmonella arizonae (strain ATCC BAA-731 / CDC346-86 / RSK2980).